A 449-amino-acid chain; its full sequence is Aminopeptidase C (449 aa).

Active-site residues include C70, H364, and N385.

Belongs to the peptidase C1 family. Homohexamer.

The protein localises to the cytoplasm. It catalyses the reaction Inactivates bleomycin B2 (a cytotoxic glycometallopeptide) by hydrolysis of a carboxyamide bond of beta-aminoalanine, but also shows general aminopeptidase activity. The specificity varies somewhat with source, but amino acid arylamides of Met, Leu and Ala are preferred.. The polypeptide is Aminopeptidase C (pepC) (Lactobacillus helveticus (Lactobacillus suntoryeus)).